An 85-amino-acid chain; its full sequence is Elongation factor 1-beta (85 aa).

This sequence belongs to the EF-1-beta/EF-1-delta family.

Its function is as follows. Promotes the exchange of GDP for GTP in EF-1-alpha/GDP, thus allowing the regeneration of EF-1-alpha/GTP that could then be used to form the ternary complex EF-1-alpha/GTP/AAtRNA. This chain is Elongation factor 1-beta, found in Methanospirillum hungatei JF-1 (strain ATCC 27890 / DSM 864 / NBRC 100397 / JF-1).